We begin with the raw amino-acid sequence, 509 residues long: Maturase K (509 aa).

This sequence belongs to the intron maturase 2 family. MatK subfamily.

It localises to the plastid. It is found in the chloroplast. Usually encoded in the trnK tRNA gene intron. Probably assists in splicing its own and other chloroplast group II introns. The polypeptide is Maturase K (Nicotiana paniculata).